Consider the following 106-residue polypeptide: Phosphoribosyl-ATP pyrophosphatase (106 aa).

This sequence belongs to the PRA-PH family.

Its subcellular location is the cytoplasm. The catalysed reaction is 1-(5-phospho-beta-D-ribosyl)-ATP + H2O = 1-(5-phospho-beta-D-ribosyl)-5'-AMP + diphosphate + H(+). It participates in amino-acid biosynthesis; L-histidine biosynthesis; L-histidine from 5-phospho-alpha-D-ribose 1-diphosphate: step 2/9. The chain is Phosphoribosyl-ATP pyrophosphatase from Rhizorhabdus wittichii (strain DSM 6014 / CCUG 31198 / JCM 15750 / NBRC 105917 / EY 4224 / RW1) (Sphingomonas wittichii).